We begin with the raw amino-acid sequence, 201 residues long: MARYTGPSTRIARKFGEAIFGDDKSFEKRNYPPGQHGMAKKRGKKSEFAIQLMEKQKAKYSYGILEKQFRGLFKKAAASKGVTGEILLQLCEARLDNVVYRMGIAPTRRAARQIVSHRHVTVNGELVNVPSYHLKPGDKVAVREKSKSLEAIDRSLSNSSHVYEWITWNTAQMEGTFVSVPARLQIPENIKEQLIVELYNK.

Positions 93-153 constitute an S4 RNA-binding domain; the sequence is ARLDNVVYRM…EKSKSLEAID (61 aa).

This sequence belongs to the universal ribosomal protein uS4 family. Part of the 30S ribosomal subunit. Contacts protein S5. The interaction surface between S4 and S5 is involved in control of translational fidelity.

Functionally, one of the primary rRNA binding proteins, it binds directly to 16S rRNA where it nucleates assembly of the body of the 30S subunit. With S5 and S12 plays an important role in translational accuracy. This is Small ribosomal subunit protein uS4 from Flavobacterium psychrophilum (strain ATCC 49511 / DSM 21280 / CIP 103535 / JIP02/86).